Reading from the N-terminus, the 510-residue chain is uncharacterized protein (510 aa).

4 disordered regions span residues 1–154, 208–227, 234–276, and 368–480; these read MGSP…ATFL, DGNHGNQAKNSGPAETGDLA, TRES…QGIL, and NFYT…GCPR. Ser-43 is subject to Phosphoserine. The segment covering 50–60 has biased composition (polar residues); it reads PLVSQQDTSEA. Positions 78–92 are enriched in basic and acidic residues; the sequence is EEERLGSPEDEKMDG. Ser-84 carries the phosphoserine modification. 2 stretches are compositionally biased toward polar residues: residues 97-109 and 118-135; these read SQPSVETEQQVAN and QPSSESFCAETETGSNRR. Ser-120 carries the post-translational modification Phosphoserine. The segment covering 139–151 has biased composition (low complexity); it reads ASGSEEAKAASAA. The segment covering 243-255 has biased composition (low complexity); it reads SSLLTTTRGLTSG. The span at 379–395 shows a compositional bias: basic and acidic residues; it reads RTKELQLVAKEDTDSTR. Residues 414–441 show a composition bias toward polar residues; it reads SVHQEFSSGDINTRSLQDPGNSQSSGLS.

This is an uncharacterized protein from Rattus norvegicus (Rat).